The sequence spans 134 residues: ATP synthase epsilon chain, plastid (134 aa).

The protein belongs to the ATPase epsilon chain family. In terms of assembly, F-type ATPases have 2 components, CF(1) - the catalytic core - and CF(0) - the membrane proton channel. CF(1) has five subunits: alpha(3), beta(3), gamma(1), delta(1), epsilon(1). CF(0) has three main subunits: a, b and c.

Its subcellular location is the plastid membrane. Its function is as follows. Produces ATP from ADP in the presence of a proton gradient across the membrane. The sequence is that of ATP synthase epsilon chain, plastid from Prototheca wickerhamii.